A 151-amino-acid chain; its full sequence is MARVQFKQRESTDAIFVHCSATKPSQNVGVREIRQWHKEQGWLDVGYHFIIKRDGTVEAGRDEMAVGSHAKGYNHNSIGVCLVGGIDDKGKFDANFTPAQMQSLRSLLVTLLAKYEGAVLRAHHEVAPKACPSFDLKRWWEKNELVTSDRG.

In terms of domain architecture, N-acetylmuramoyl-L-alanine amidase spans 10 to 132 (ESTDAIFVHC…HHEVAPKACP (123 aa)). Zn(2+) is bound by residues His18, His123, and Cys131.

The protein belongs to the N-acetylmuramoyl-L-alanine amidase 2 family. In terms of assembly, interacts with the viral RNA polymerase. Zn(2+) is required as a cofactor.

Its subcellular location is the host cytoplasm. The enzyme catalyses Hydrolyzes the link between N-acetylmuramoyl residues and L-amino acid residues in certain cell-wall glycopeptides.. Binding to the viral RNA polymerase inhibits amidase activity. Plays an important role in the switch between viral transcription and genome replication. Once produced in sufficient amount, interacts with and inhibits the viral RNA polymerase that becomes unable to produce additional late transcripts. This lysozyme-polymerase complex in turn plays an active role in viral genome replication and packaging. Functionally, endolysin with amidase activity that degrades host peptidoglycans and participates with the holin and spanin proteins in the sequential events which lead to the programmed host cell lysis releasing the mature viral particles. Once the holin has permeabilized the host cell membrane, the endolysin can reach the periplasm and breaking down the peptidoglycan layer. The sequence is that of Endolysin from Escherichia coli (Bacteriophage T7).